Reading from the N-terminus, the 351-residue chain is Cyanuric acid amidohydrolase (351 aa).

The interval 1–96 (MPSLRAHVFR…HWTVFARETV (96 aa)) is RU A. Substrate-binding positions include R53 and 77-78 (SG). The tract at residues 103-240 (ALAIGVSRTP…HEIIVLGMSA (138 aa)) is RU B. K153 is an active-site residue. Residues R185 and 223 to 224 (SS) contribute to the substrate site. S223 serves as the catalytic Nucleophile. Residues 246-351 (LSIDHAVMRD…PVAIIVEKEQ (106 aa)) are RU C. A Mg(2+)-binding site is contributed by E283. Substrate-binding positions include R310 and 329–330 (SG). A332, Q335, G336, P337, and G340 together coordinate Mg(2+).

This sequence belongs to the cyclic amide hydrolase (CyAH) family. As to quaternary structure, homotetramer.

It carries out the reaction cyanurate + H2O = 1-carboxybiuret + H(+). It functions in the pathway xenobiotic degradation; atrazine degradation; biuret from cyanurate: step 1/1. With respect to regulation, inhibited by barbituric acid. Functionally, responsible for the hydrolysis of cyanuric acid, an intermediate formed during catabolism of s-triazine based compounds in herbicides such as atrazine and polymers such as melamine. Catalyzes the hydrolytic opening of the s-triazine ring of cyanuric acid (2,4,6-trihydroxy-s-triazine) to yield carbon dioxide and carboxybiuret, which spontaneously decarboxylates to biuret. This Rhizobium johnstonii (strain DSM 114642 / LMG 32736 / 3841) (Rhizobium leguminosarum bv. viciae) protein is Cyanuric acid amidohydrolase.